Here is a 59-residue protein sequence, read N- to C-terminus: Large ribosomal subunit protein bL32c (59 aa).

Positions 37–59 (SRSFSSGNEHPKPKGFSGQQTNK) are disordered.

It belongs to the bacterial ribosomal protein bL32 family.

The protein resides in the plastid. It localises to the chloroplast. The sequence is that of Large ribosomal subunit protein bL32c from Hordeum vulgare (Barley).